The chain runs to 469 residues: Ribosomal protein uS12 methylthiotransferase RimO (469 aa).

The MTTase N-terminal domain maps to 1–115 (MKFHIITLGC…IGSVVAGGVA (115 aa)). [4Fe-4S] cluster is bound by residues C10, C46, C78, C180, C184, and C187. Residues 166-398 (NKRGPSAYLK…MAVQQVISRA (233 aa)) enclose the Radical SAM core domain. The TRAM domain occupies 401–469 (ARFVGQTMKV…TDYDLWGEIV (69 aa)).

Belongs to the methylthiotransferase family. RimO subfamily. Requires [4Fe-4S] cluster as cofactor.

The protein resides in the cytoplasm. It carries out the reaction L-aspartate(89)-[ribosomal protein uS12]-hydrogen + (sulfur carrier)-SH + AH2 + 2 S-adenosyl-L-methionine = 3-methylsulfanyl-L-aspartate(89)-[ribosomal protein uS12]-hydrogen + (sulfur carrier)-H + 5'-deoxyadenosine + L-methionine + A + S-adenosyl-L-homocysteine + 2 H(+). Catalyzes the methylthiolation of an aspartic acid residue of ribosomal protein uS12. This Herpetosiphon aurantiacus (strain ATCC 23779 / DSM 785 / 114-95) protein is Ribosomal protein uS12 methylthiotransferase RimO.